A 239-amino-acid chain; its full sequence is Probable transcriptional regulatory protein Pnuc_0618 (239 aa).

The tract at residues 1–21 is disordered; the sequence is MAGHSKWANIQHRKGRQDEKR.

The protein belongs to the TACO1 family.

Its subcellular location is the cytoplasm. This Polynucleobacter asymbioticus (strain DSM 18221 / CIP 109841 / QLW-P1DMWA-1) (Polynucleobacter necessarius subsp. asymbioticus) protein is Probable transcriptional regulatory protein Pnuc_0618.